The chain runs to 494 residues: Keratin, type I cytoskeletal 12 (494 aa).

Polar residues predominate over residues 1–12 (MDLSNNTMSLSV). The tract at residues 1-32 (MDLSNNTMSLSVRTPGLSRRLSSQSVIGRPRG) is disordered. A head region spans residues 1 to 124 (MDLSNNTMSL…GNDGGLLSGS (124 aa)). A coil 1A region spans residues 125–160 (EKETMQNLNDRLASYLDKVRALEEANTELENKIREW). In terms of domain architecture, IF rod spans 125–440 (EKETMQNLND…RLLDGEAQGD (316 aa)). Residues 164–182 (RGTGTADASQSDYSKYYPL) form a linker 1 region. The interval 183-274 (IEDLRNKIIS…KNHEDELQSF (92 aa)) is coil 1B. Positions 275–297 (RVGGPGEVSVEMDAAPGVDLTRL) are linker 12. The tract at residues 298–435 (LNDMRAQYET…IETYRRLLDG (138 aa)) is coil 2. The tail stretch occupies residues 436–494 (EAQGDGLEESLFVTDSKSQAQSTDSSKDPTKTRKIKTVVQEMVNGEVVSSQVQEIEELM). A disordered region spans residues 446–468 (LFVTDSKSQAQSTDSSKDPTKTR). The span at 448-459 (VTDSKSQAQSTD) shows a compositional bias: polar residues.

The protein belongs to the intermediate filament family. In terms of assembly, heterotetramer of two type I and two type II keratins. Keratin-3 associates with keratin-12. In terms of tissue distribution, expressed in the corneal epithelium (at protein level).

Functionally, involved in corneal epithelium organization, integrity and corneal keratin expression. This chain is Keratin, type I cytoskeletal 12 (KRT12), found in Homo sapiens (Human).